The following is a 119-amino-acid chain: Large ribosomal subunit protein bL12 (119 aa).

The protein belongs to the bacterial ribosomal protein bL12 family. As to quaternary structure, homodimer. Part of the ribosomal stalk of the 50S ribosomal subunit. Forms a multimeric L10(L12)X complex, where L10 forms an elongated spine to which 2 to 4 L12 dimers bind in a sequential fashion. Binds GTP-bound translation factors.

Its function is as follows. Forms part of the ribosomal stalk which helps the ribosome interact with GTP-bound translation factors. Is thus essential for accurate translation. The sequence is that of Large ribosomal subunit protein bL12 from Lysinibacillus sphaericus (strain C3-41).